A 66-amino-acid chain; its full sequence is Beta-toxin Chui2 (66 aa).

The LCN-type CS-alpha/beta domain occupies 1–66 (KEGYIVNSYT…VWPLKNKTCN (66 aa)). 4 disulfide bridges follow: Cys12–Cys65, Cys16–Cys41, Cys25–Cys46, and Cys29–Cys48. Asn66 carries the asparagine amide modification.

This sequence belongs to the long (4 C-C) scorpion toxin superfamily. Sodium channel inhibitor family. Beta subfamily. In terms of tissue distribution, expressed by the venom gland.

Its subcellular location is the secreted. Its function is as follows. Beta toxins bind voltage-independently at site-4 of sodium channels (Nav) and shift the voltage of activation toward more negative potentials thereby affecting sodium channel activation and promoting spontaneous and repetitive firing. The sequence is that of Beta-toxin Chui2 from Centruroides huichol (Scorpion).